The sequence spans 270 residues: Large ribosomal subunit protein uL30 (270 aa).

Met-1 carries the N-acetylmethionine modification. 6 consecutive repeat copies span residues 7-18, 19-29, 30-40, 41-52, 53-64, and 65-76. Residues 7–76 are 6 X 12 AA tandem repeats; the sequence is KKKKVATVPG…ARRKLIYEKA (70 aa). Position 39 is a phosphothreonine (Thr-39). Lys-146 carries the N6-acetyllysine modification. The residue at position 149 (Lys-149) is an N6-succinyllysine. Tyr-161 carries the phosphotyrosine modification.

The protein belongs to the universal ribosomal protein uL30 family. In terms of assembly, component of the large ribosomal subunit. Homodimer. Interacts with DHX33.

It localises to the cytoplasm. Component of the large ribosomal subunit. The ribosome is a large ribonucleoprotein complex responsible for the synthesis of proteins in the cell. Binds to G-rich structures in 28S rRNA and in mRNAs. Plays a regulatory role in the translation apparatus; inhibits cell-free translation of mRNAs. This Mus musculus (Mouse) protein is Large ribosomal subunit protein uL30 (Rpl7).